The primary structure comprises 210 residues: 3-hexulose-6-phosphate synthase (210 aa).

It belongs to the HPS/KGPDC family. HPS subfamily.

The catalysed reaction is D-ribulose 5-phosphate + formaldehyde = D-arabino-hex-3-ulose 6-phosphate. Its pathway is one-carbon metabolism; formaldehyde assimilation via RuMP pathway; D-fructose 6-phosphate from D-ribulose 5-phosphate and formaldehyde: step 1/2. Its function is as follows. Catalyzes the condensation of ribulose 5-phosphate with formaldehyde to form 3-hexulose 6-phosphate. The chain is 3-hexulose-6-phosphate synthase from Staphylococcus epidermidis (strain ATCC 35984 / DSM 28319 / BCRC 17069 / CCUG 31568 / BM 3577 / RP62A).